Here is a 291-residue protein sequence, read N- to C-terminus: Protease HtpX homolog (291 aa).

A run of 2 helical transmembrane segments spans residues 4–24 (ILLFVLTNVAVVAVLGIVASL) and 39–59 (GSLLGFALVIGFGGAIISLLI). Residue His-144 coordinates Zn(2+). Glu-145 is an active-site residue. His-148 contributes to the Zn(2+) binding site. A run of 2 helical transmembrane segments spans residues 159–179 (LIQGVMNTFVVFLSRVIAFAI) and 199–219 (ITTVVLDIVLGFAAAIVVAWF). Glu-224 is a Zn(2+) binding site.

It belongs to the peptidase M48B family. It depends on Zn(2+) as a cofactor.

Its subcellular location is the cell inner membrane. This is Protease HtpX homolog from Albidiferax ferrireducens (strain ATCC BAA-621 / DSM 15236 / T118) (Rhodoferax ferrireducens).